Here is a 473-residue protein sequence, read N- to C-terminus: MNAAVIDSNSAQDYVVADIALAGWGRKELNIAETEMPGLVQIRDEYKAQQPLKGARIAGSLHMTIQTGVLIETLKALGADVRWASCNIFSTQDHAAAAIVEAGTPVFAFKGESLDEYWEFSHRIFEWPNGEFANMILDDGGDATLLLILGSKAEKDRSVIAKPTNEEEVALFKSIERHLEIDGSWYSKRLAHIKGVTEETTTGVHRLYQMEKDGRLPFPAFNVNDSVTKSKFDNLYGCRESLVDGIKRATDVMIAGKIAVVAGYGDVGKGCAQSLRGLGATVWVTEIDPICALQAAMEGYRVVTMEYAADKADIFVTATGNYHVINHDHMKAMRHNAIVCNIGHFDSEIDVASTRQYQWENIKPQVDHIIFPDGKRVILLAEGRLVNLGCATGHPSFVMSNSFTNQTLAQIELFTRGGEYANKVYVLPKHLDEKVARLHLARIGAQLSELSDDQAAYIGVPKAGPFKPDHYRY.

Residues T64, D139, and E199 each coordinate substrate. Residue 200–202 (TTT) coordinates NAD(+). 2 residues coordinate substrate: K229 and D233. NAD(+)-binding positions include N234, 263-268 (GYGDVG), E286, N321, 342-344 (IGH), and N387.

This sequence belongs to the adenosylhomocysteinase family. Requires NAD(+) as cofactor.

It localises to the cytoplasm. The enzyme catalyses S-adenosyl-L-homocysteine + H2O = L-homocysteine + adenosine. It participates in amino-acid biosynthesis; L-homocysteine biosynthesis; L-homocysteine from S-adenosyl-L-homocysteine: step 1/1. Its function is as follows. May play a key role in the regulation of the intracellular concentration of adenosylhomocysteine. In Burkholderia thailandensis (strain ATCC 700388 / DSM 13276 / CCUG 48851 / CIP 106301 / E264), this protein is Adenosylhomocysteinase.